Reading from the N-terminus, the 191-residue chain is Glycerol-3-phosphate acyltransferase (191 aa).

The next 5 membrane-spanning stretches (helical) occupy residues Ile-5–Ile-25, Leu-51–Gln-71, Asp-78–Leu-98, Ile-114–Ile-134, and Ser-153–Leu-173.

It belongs to the PlsY family. In terms of assembly, probably interacts with PlsX.

The protein resides in the cell membrane. It catalyses the reaction an acyl phosphate + sn-glycerol 3-phosphate = a 1-acyl-sn-glycero-3-phosphate + phosphate. It participates in lipid metabolism; phospholipid metabolism. Functionally, catalyzes the transfer of an acyl group from acyl-phosphate (acyl-PO(4)) to glycerol-3-phosphate (G3P) to form lysophosphatidic acid (LPA). This enzyme utilizes acyl-phosphate as fatty acyl donor, but not acyl-CoA or acyl-ACP. This is Glycerol-3-phosphate acyltransferase from Wolbachia pipientis subsp. Culex pipiens (strain wPip).